A 221-amino-acid polypeptide reads, in one-letter code: Probable septum site-determining protein MinC (221 aa).

The protein belongs to the MinC family. Interacts with MinD and FtsZ.

Its function is as follows. Cell division inhibitor that blocks the formation of polar Z ring septums. Rapidly oscillates between the poles of the cell to destabilize FtsZ filaments that have formed before they mature into polar Z rings. Prevents FtsZ polymerization. The polypeptide is Probable septum site-determining protein MinC (Shewanella halifaxensis (strain HAW-EB4)).